The sequence spans 167 residues: Ribosome maturation factor RimM (167 aa).

The PRC barrel domain occupies 94 to 166 (DDRAWLHELE…YIHVPRFDEF (73 aa)).

This sequence belongs to the RimM family. In terms of assembly, binds ribosomal protein uS19.

The protein resides in the cytoplasm. Its function is as follows. An accessory protein needed during the final step in the assembly of 30S ribosomal subunit, possibly for assembly of the head region. Essential for efficient processing of 16S rRNA. May be needed both before and after RbfA during the maturation of 16S rRNA. It has affinity for free ribosomal 30S subunits but not for 70S ribosomes. The sequence is that of Ribosome maturation factor RimM from Chlorobium luteolum (strain DSM 273 / BCRC 81028 / 2530) (Pelodictyon luteolum).